A 455-amino-acid polypeptide reads, in one-letter code: Acetylcholinesterase collagenic tail peptide (455 aa).

An N-terminal signal peptide occupies residues 1–22 (MVVLNPMTLGIYLQLFFLSIVS). The interval 51-67 (CCLLTPPPPPLFPPPFF) is PRAD. Positions 90-282 (QSPCMQGSLG…QLIMGPKGER (193 aa)) are disordered. Collagen-like domains lie at 96 to 269 (GSLG…PGPP) and 277 to 291 (GPKG…PGRC). Pro residues predominate over residues 101 to 112 (PGPPGPQGPPGL). The segment covering 118–127 (PKGEKGELGR) has biased composition (basic and acidic residues). A heparan sulfate proteoglycan binding region spans residues 130–133 (RKGR). Residues 134–152 (PGPPGVPGMPGPIGWPGPE) show a composition bias toward pro residues. The span at 182–200 (RGEKGSRGEKGDLGPKGEK) shows a compositional bias: basic and acidic residues. The heparan sulfate proteoglycan binding stretch occupies residues 235 to 238 (KRGK). Pro residues predominate over residues 262 to 271 (RPGPPGPPPA).

Belongs to the COLQ family. In terms of assembly, homotrimer. Component of the asymmetric form of AChE, a disulfide-bonded oligomer composed of the collagenic subunits (Q) and a variable number of asymmetric catalytic subunits (T). The N-terminal of a collagenic subunit (Q) associates with the C-terminal of a catalytic subunit (T). The triple-helical tail is stabilized by disulfide bonds at each end. In terms of tissue distribution, found at the end plate of skeletal muscle.

It localises to the synapse. Functionally, anchors the catalytic subunits of asymmetric AChE to the synaptic basal lamina. The protein is Acetylcholinesterase collagenic tail peptide (COLQ) of Homo sapiens (Human).